The sequence spans 624 residues: Altered inheritance of mitochondria protein 9, mitochondrial (624 aa).

Residues methionine 1 to glutamine 34 constitute a mitochondrion transit peptide.

This sequence belongs to the AIM9 family.

Its subcellular location is the mitochondrion. The polypeptide is Altered inheritance of mitochondria protein 9, mitochondrial (AIM9) (Candida albicans (strain WO-1) (Yeast)).